The sequence spans 185 residues: Ribosome-recycling factor (185 aa).

This sequence belongs to the RRF family.

The protein localises to the cytoplasm. In terms of biological role, responsible for the release of ribosomes from messenger RNA at the termination of protein biosynthesis. May increase the efficiency of translation by recycling ribosomes from one round of translation to another. The polypeptide is Ribosome-recycling factor (Ehrlichia ruminantium (strain Welgevonden)).